A 422-amino-acid polypeptide reads, in one-letter code: UDP-N-acetylglucosamine 1-carboxyvinyltransferase (422 aa).

Phosphoenolpyruvate is bound at residue lysine 22–asparagine 23. Arginine 94 provides a ligand contact to UDP-N-acetyl-alpha-D-glucosamine. Cysteine 118 functions as the Proton donor in the catalytic mechanism. 2-(S-cysteinyl)pyruvic acid O-phosphothioketal is present on cysteine 118. UDP-N-acetyl-alpha-D-glucosamine contacts are provided by residues arginine 123–leucine 127, aspartate 309, and isoleucine 331.

It belongs to the EPSP synthase family. MurA subfamily.

It is found in the cytoplasm. It carries out the reaction phosphoenolpyruvate + UDP-N-acetyl-alpha-D-glucosamine = UDP-N-acetyl-3-O-(1-carboxyvinyl)-alpha-D-glucosamine + phosphate. It functions in the pathway cell wall biogenesis; peptidoglycan biosynthesis. In terms of biological role, cell wall formation. Adds enolpyruvyl to UDP-N-acetylglucosamine. The sequence is that of UDP-N-acetylglucosamine 1-carboxyvinyltransferase from Cereibacter sphaeroides (strain ATCC 17029 / ATH 2.4.9) (Rhodobacter sphaeroides).